The sequence spans 230 residues: Uracil-DNA glycosylase (230 aa).

Asp70 serves as the catalytic Proton acceptor.

Belongs to the uracil-DNA glycosylase (UDG) superfamily. UNG family.

The protein resides in the cytoplasm. The catalysed reaction is Hydrolyzes single-stranded DNA or mismatched double-stranded DNA and polynucleotides, releasing free uracil.. Functionally, excises uracil residues from the DNA which can arise as a result of misincorporation of dUMP residues by DNA polymerase or due to deamination of cytosine. This Pseudomonas fluorescens (strain ATCC BAA-477 / NRRL B-23932 / Pf-5) protein is Uracil-DNA glycosylase.